Reading from the N-terminus, the 101-residue chain is uncharacterized protein (101 aa).

A run of 2 helical transmembrane segments spans residues 3–23 (IVYE…LFLF) and 39–59 (AFLS…LIFF).

The protein localises to the membrane. This is an uncharacterized protein from Saccharomyces cerevisiae (strain ATCC 204508 / S288c) (Baker's yeast).